Reading from the N-terminus, the 454-residue chain is Bifunctional protein GlmU (454 aa).

The pyrophosphorylase stretch occupies residues 1–227 (MTQLSVVILA…FMEVEGANNR (227 aa)). Residues 9-12 (LAAG), K23, Q74, 79-80 (GT), 101-103 (YGD), G138, E152, N167, and N225 contribute to the UDP-N-acetyl-alpha-D-glucosamine site. D103 is a binding site for Mg(2+). N225 is a binding site for Mg(2+). The segment at 228–248 (LQLAALERFYQKTQAEKLLLA) is linker. Residues 249–454 (GVRLIDQARF…QGWQRPTKKK (206 aa)) form an N-acetyltransferase region. 2 residues coordinate UDP-N-acetyl-alpha-D-glucosamine: R331 and K349. H361 acts as the Proton acceptor in catalysis. The UDP-N-acetyl-alpha-D-glucosamine site is built by Y364 and N375. Residues A378, 384-385 (NY), S403, A421, and R438 each bind acetyl-CoA.

It in the N-terminal section; belongs to the N-acetylglucosamine-1-phosphate uridyltransferase family. In the C-terminal section; belongs to the transferase hexapeptide repeat family. Homotrimer. Mg(2+) is required as a cofactor.

Its subcellular location is the cytoplasm. It catalyses the reaction alpha-D-glucosamine 1-phosphate + acetyl-CoA = N-acetyl-alpha-D-glucosamine 1-phosphate + CoA + H(+). The enzyme catalyses N-acetyl-alpha-D-glucosamine 1-phosphate + UTP + H(+) = UDP-N-acetyl-alpha-D-glucosamine + diphosphate. Its pathway is nucleotide-sugar biosynthesis; UDP-N-acetyl-alpha-D-glucosamine biosynthesis; N-acetyl-alpha-D-glucosamine 1-phosphate from alpha-D-glucosamine 6-phosphate (route II): step 2/2. It participates in nucleotide-sugar biosynthesis; UDP-N-acetyl-alpha-D-glucosamine biosynthesis; UDP-N-acetyl-alpha-D-glucosamine from N-acetyl-alpha-D-glucosamine 1-phosphate: step 1/1. The protein operates within bacterial outer membrane biogenesis; LPS lipid A biosynthesis. Its function is as follows. Catalyzes the last two sequential reactions in the de novo biosynthetic pathway for UDP-N-acetylglucosamine (UDP-GlcNAc). The C-terminal domain catalyzes the transfer of acetyl group from acetyl coenzyme A to glucosamine-1-phosphate (GlcN-1-P) to produce N-acetylglucosamine-1-phosphate (GlcNAc-1-P), which is converted into UDP-GlcNAc by the transfer of uridine 5-monophosphate (from uridine 5-triphosphate), a reaction catalyzed by the N-terminal domain. The protein is Bifunctional protein GlmU of Actinobacillus pleuropneumoniae serotype 7 (strain AP76).